Here is a 63-residue protein sequence, read N- to C-terminus: Large ribosomal subunit protein uL29 (63 aa).

The protein belongs to the universal ribosomal protein uL29 family.

This chain is Large ribosomal subunit protein uL29, found in Vibrio campbellii (strain ATCC BAA-1116).